The primary structure comprises 485 residues: Bifunctional protein GlmU (485 aa).

The interval 1–241 is pyrophosphorylase; sequence MSASDFSSAV…ARELAGVNDR (241 aa). UDP-N-acetyl-alpha-D-glucosamine-binding positions include 13-16, K27, Q84, and 89-90; these read LAAG and GT. D114 contacts Mg(2+). The UDP-N-acetyl-alpha-D-glucosamine site is built by G151, E166, N181, and N239. N239 serves as a coordination point for Mg(2+). Residues 242-262 form a linker region; sequence VQLAEAGAELNRRTVIAAMRG. The tract at residues 263–485 is N-acetyltransferase; it reads GATIVDPATT…AAQNVHNQEG (223 aa). UDP-N-acetyl-alpha-D-glucosamine-binding residues include R344 and K362. The active-site Proton acceptor is H374. Y377 and N388 together coordinate UDP-N-acetyl-alpha-D-glucosamine. Acetyl-CoA is bound by residues A391, 397 to 398, S416, and A434; that span reads NY. Residues 465-485 form a disordered region; it reads RPGTAAAQAAEAAQNVHNQEG. Over residues 469–478 the composition is skewed to low complexity; sequence AAAQAAEAAQ.

In the N-terminal section; belongs to the N-acetylglucosamine-1-phosphate uridyltransferase family. The protein in the C-terminal section; belongs to the transferase hexapeptide repeat family. In terms of assembly, homotrimer. Mg(2+) serves as cofactor.

Its subcellular location is the cytoplasm. It catalyses the reaction alpha-D-glucosamine 1-phosphate + acetyl-CoA = N-acetyl-alpha-D-glucosamine 1-phosphate + CoA + H(+). The enzyme catalyses N-acetyl-alpha-D-glucosamine 1-phosphate + UTP + H(+) = UDP-N-acetyl-alpha-D-glucosamine + diphosphate. Its pathway is nucleotide-sugar biosynthesis; UDP-N-acetyl-alpha-D-glucosamine biosynthesis; N-acetyl-alpha-D-glucosamine 1-phosphate from alpha-D-glucosamine 6-phosphate (route II): step 2/2. It functions in the pathway nucleotide-sugar biosynthesis; UDP-N-acetyl-alpha-D-glucosamine biosynthesis; UDP-N-acetyl-alpha-D-glucosamine from N-acetyl-alpha-D-glucosamine 1-phosphate: step 1/1. It participates in bacterial outer membrane biogenesis; LPS lipid A biosynthesis. Its function is as follows. Catalyzes the last two sequential reactions in the de novo biosynthetic pathway for UDP-N-acetylglucosamine (UDP-GlcNAc). The C-terminal domain catalyzes the transfer of acetyl group from acetyl coenzyme A to glucosamine-1-phosphate (GlcN-1-P) to produce N-acetylglucosamine-1-phosphate (GlcNAc-1-P), which is converted into UDP-GlcNAc by the transfer of uridine 5-monophosphate (from uridine 5-triphosphate), a reaction catalyzed by the N-terminal domain. The polypeptide is Bifunctional protein GlmU (Corynebacterium glutamicum (strain ATCC 13032 / DSM 20300 / JCM 1318 / BCRC 11384 / CCUG 27702 / LMG 3730 / NBRC 12168 / NCIMB 10025 / NRRL B-2784 / 534)).